The chain runs to 413 residues: MDFTNLKNTDPELLDMIKKEEERQEYNIELIASENFTSLSVMESMGSLLTNKYAEGYPHKRYYGGCEFVDEVEDLARERLKKLFAAEHANVQPHSGSQANMAVYMSVLQTGDTILGMDLSHGGHLTHGSPVNFSGKLYNFISYGVDKETETIDYEKLKKIALENRPKMIVSGASAYPRIIDFQKIREICDEIDAYMMVDMAHIAGLVATGLHPSPVPYADFVTTTTHKTLRGPRGGAILCKEKYAKAVDKAIFPGIQGGPLMHTIAAKAVCFGEALREDYKEYMQQVVKNTKVLGEELKNYGFRLISGGTDNHLLLIDLTNKNITGKDAEKLLDSVGITVNKNTIPFETLSPFITSGIRIGTPAVTTRGFKEEEMKKIAYFMNYSIEHREENLSQIKEQIKEICKKYPLYQNA.

(6S)-5,6,7,8-tetrahydrofolate-binding positions include Leu119 and 123–125 (GHL). Residue Lys228 is modified to N6-(pyridoxal phosphate)lysine. A (6S)-5,6,7,8-tetrahydrofolate-binding site is contributed by 351–353 (SPF).

The protein belongs to the SHMT family. In terms of assembly, homodimer. Requires pyridoxal 5'-phosphate as cofactor.

The protein resides in the cytoplasm. It catalyses the reaction (6R)-5,10-methylene-5,6,7,8-tetrahydrofolate + glycine + H2O = (6S)-5,6,7,8-tetrahydrofolate + L-serine. It participates in one-carbon metabolism; tetrahydrofolate interconversion. Its pathway is amino-acid biosynthesis; glycine biosynthesis; glycine from L-serine: step 1/1. Its function is as follows. Catalyzes the reversible interconversion of serine and glycine with tetrahydrofolate (THF) serving as the one-carbon carrier. This reaction serves as the major source of one-carbon groups required for the biosynthesis of purines, thymidylate, methionine, and other important biomolecules. Also exhibits THF-independent aldolase activity toward beta-hydroxyamino acids, producing glycine and aldehydes, via a retro-aldol mechanism. The chain is Serine hydroxymethyltransferase from Clostridium botulinum (strain ATCC 19397 / Type A).